A 411-amino-acid polypeptide reads, in one-letter code: Adherens junction-associated protein 1 (411 aa).

The N-terminal stretch at 1 to 43 (MWIQQLLGLSSMSIRWPGRPLGSHAWILIAMFQLAVDLPACEA) is a signal peptide. At 44 to 282 (LGPGPEFWLL…GEASGLAVHQ (239 aa)) the chain is on the extracellular side. Disordered stretches follow at residues 89-108 (IHGQ…RDQA), 115-197 (AGLA…SNTF), and 239-268 (SLDP…VTQP). Residues 115–146 (AGLAKPPAAAKSSPSLASSSSSSSSAVAGGAP) show a composition bias toward low complexity. Residues 166–178 (SFDSRGSRPTTET) show a composition bias toward polar residues. Over residues 247-263 (PGGVSTTEPSTSPSNNG) the composition is skewed to low complexity. A helical transmembrane segment spans residues 283 to 303 (IITITVSLIMVIAALITTLVL). Residues 303–411 (LKNCCAQSGN…VSEKWFEISC (109 aa)) are targeting signals. The Cytoplasmic portion of the chain corresponds to 304 to 411 (KNCCAQSGNT…VSEKWFEISC (108 aa)). A disordered region spans residues 311 to 330 (GNTRRNSHQRKTNQQEESCQ).

As to quaternary structure, forms a complex with CDH1 and CTNNB1; interacts directly with CTNNB1. Interacts with AP1M2. Interacts with isoform 2 of BSG/CD147. Post-translationally, thr-237 and Ser-239 may be phosphorylated; however as this position is probably extracellular, the in vivo relevance is not proven. As to expression, expressed in uterus and pancreas (at protein level).

It is found in the basolateral cell membrane. Its subcellular location is the apical cell membrane. It localises to the cell junction. The protein resides in the adherens junction. Its function is as follows. Plays a role in cell adhesion and cell migration. This Homo sapiens (Human) protein is Adherens junction-associated protein 1 (AJAP1).